The primary structure comprises 616 residues: Chaperone protein HscA (616 aa).

It belongs to the heat shock protein 70 family.

Functionally, chaperone involved in the maturation of iron-sulfur cluster-containing proteins. Has a low intrinsic ATPase activity which is markedly stimulated by HscB. Involved in the maturation of IscU. This Salmonella paratyphi C (strain RKS4594) protein is Chaperone protein HscA.